A 251-amino-acid chain; its full sequence is Ubiquitin-conjugating enzyme E2 6 (251 aa).

Residues 1 to 229 (MASIQANKRL…DQDKNPGENS (229 aa)) are Cytoplasmic-facing. Residues 5–154 (QANKRLTKEY…YSNFKFKNMF (150 aa)) form the UBC core domain. Cysteine 87 serves as the catalytic Glycyl thioester intermediate. Over residues 173–185 (AESKGAQQEENKA) the composition is skewed to basic and acidic residues. A disordered region spans residues 173-200 (AESKGAQQEENKAQKLATEKATSLDDIS). A helical transmembrane segment spans residues 230–250 (NIKSLLCLILAIAIFFVGLIM).

This sequence belongs to the ubiquitin-conjugating enzyme family.

It is found in the endoplasmic reticulum membrane. It carries out the reaction S-ubiquitinyl-[E1 ubiquitin-activating enzyme]-L-cysteine + [E2 ubiquitin-conjugating enzyme]-L-cysteine = [E1 ubiquitin-activating enzyme]-L-cysteine + S-ubiquitinyl-[E2 ubiquitin-conjugating enzyme]-L-cysteine.. Its pathway is protein modification; protein ubiquitination. In terms of biological role, catalyzes the covalent attachment of ubiquitin to other proteins. Functions in degradation of misfolded or regulated proteins localized in the endoplasmic reticulum (ER) lumen or membrane via the ubiquitin-proteasome system. Cognate E2 conjugating enzyme for the DOA10 ubiquitin ligase complex, which is part of the ERAD-C pathway responsible for the rapid degradation of membrane proteins with misfolded cytoplasmic domains. The chain is Ubiquitin-conjugating enzyme E2 6 (UBC6) from Kluyveromyces lactis (strain ATCC 8585 / CBS 2359 / DSM 70799 / NBRC 1267 / NRRL Y-1140 / WM37) (Yeast).